A 144-amino-acid polypeptide reads, in one-letter code: Transcription antitermination protein NusB (144 aa).

It belongs to the NusB family.

In terms of biological role, involved in transcription antitermination. Required for transcription of ribosomal RNA (rRNA) genes. Binds specifically to the boxA antiterminator sequence of the ribosomal RNA (rrn) operons. This chain is Transcription antitermination protein NusB, found in Histophilus somni (strain 2336) (Haemophilus somnus).